Consider the following 380-residue polypeptide: MTNYPITYRLIKKEKHTGARLGEIITPHGTFPTPMFMPVGTQATVKTQSPEELKEIGSGIILSNTYHLWLRPGDELIARAGGLHKFMNWDQAILTDSGGFQVYSLADSRNITEEGVTFKNHLNGSKMFLSPEKAISIQNNLGSDIMMSFDECPQFYQPYDYVKKSIERTSRWAERGLKAHRRPHDQGLFGIVQGAGFEDLRRQSAADLVGMDFPGYSIGGLAVGESHAEMNAVLDFTTPLLPENKPRYLMGVGAPDSLIDGVIRGVDMFDCVLPTRIARNGTCMTSEGRLVVKNAKFAEDFTPLDHNCDCYTCQHYTRAYLRHLLKADETFGMRLTSYHNLYFLVNLMKQVRQAIMDDNLLEFRQDFLERYGYNSSSRNF.

Residue Asp96 is the Proton acceptor of the active site. Substrate contacts are provided by residues Asp96–Phe100, Asp150, Gln193, and Gly220. The tract at residues Gly251–Ser257 is RNA binding. The active-site Nucleophile is Asp270. Residues Thr275–Arg279 are RNA binding; important for wobble base 34 recognition. Positions 308, 310, 313, and 339 each coordinate Zn(2+).

The protein belongs to the queuine tRNA-ribosyltransferase family. Homodimer. Within each dimer, one monomer is responsible for RNA recognition and catalysis, while the other monomer binds to the replacement base PreQ1. It depends on Zn(2+) as a cofactor.

The enzyme catalyses 7-aminomethyl-7-carbaguanine + guanosine(34) in tRNA = 7-aminomethyl-7-carbaguanosine(34) in tRNA + guanine. The protein operates within tRNA modification; tRNA-queuosine biosynthesis. In terms of biological role, catalyzes the base-exchange of a guanine (G) residue with the queuine precursor 7-aminomethyl-7-deazaguanine (PreQ1) at position 34 (anticodon wobble position) in tRNAs with GU(N) anticodons (tRNA-Asp, -Asn, -His and -Tyr). Catalysis occurs through a double-displacement mechanism. The nucleophile active site attacks the C1' of nucleotide 34 to detach the guanine base from the RNA, forming a covalent enzyme-RNA intermediate. The proton acceptor active site deprotonates the incoming PreQ1, allowing a nucleophilic attack on the C1' of the ribose to form the product. After dissociation, two additional enzymatic reactions on the tRNA convert PreQ1 to queuine (Q), resulting in the hypermodified nucleoside queuosine (7-(((4,5-cis-dihydroxy-2-cyclopenten-1-yl)amino)methyl)-7-deazaguanosine). The chain is Queuine tRNA-ribosyltransferase from Streptococcus equi subsp. zooepidemicus (strain H70).